We begin with the raw amino-acid sequence, 512 residues long: Cytochrome P450 monooxygenase gliC (512 aa).

The N-terminal stretch at 1-19 (MAFTLTILVPCMVLALVAA) is a signal peptide. N-linked (GlcNAc...) asparagine glycans are attached at residues asparagine 118, asparagine 421, and asparagine 434. Heme is bound at residue cysteine 452.

This sequence belongs to the cytochrome P450 family. Requires heme as cofactor.

Its pathway is mycotoxin biosynthesis. Functionally, cytochrome P450 monooxygenase; part of the gene cluster that mediates the biosynthesis of gliotoxin, a member of the epipolythiodioxopiperazine (ETP) class of toxins characterized by a disulfide bridged cyclic dipeptide. The first step in gliotoxin biosynthesis is the condensation of serine and phenylalanine to form the cyclo-L-phenylalanyl-L-serine diketopiperazine (DKP) by the NRPS gliP. GliP is also able to produce the DKP cyclo-L-tryptophanyl-L-serine, suggesting that the substrate specificity of the first adenylation (A) domain in gliP is sufficiently relaxed to accommodate both L-Phe and L-Trp. The cytochrome P450 monooxygenase gliC has been shown to catalyze the subsequent hydroxylation of the alpha-carbon of L-Phe in cyclo-L-phenylalanyl-L-serine whereas the second cytochrome P450 enzyme, gliF, is presumably involved in the modification of the DKP side chain. The glutathione S-transferase (GST) gliG then forms a bis-glutathionylated biosynthetic intermediate which is responsible for the sulfurization of gliotoxin. This bis-glutathionylated intermediate is subsequently processed by the gamma-glutamyl cyclotransferase gliK to remove both gamma-glutamyl moieties. Subsequent processing via gliI yields a biosynthetic intermediate, which is N-methylated via the N-methyltransferase gliN, before the gliotoxin oxidoreductase gliT-mediated disulfide bridge closure. GliN-mediated amide methylation confers stability to ETP, damping the spontaneous formation of tri- and tetrasulfides. Intracellular dithiol gliotoxin oxidized by gliT is subsequently effluxed by gliA. Gliotoxin contributes to pathogenesis during invasive aspergillosis. In macrophages and neutrophils, gliotoxin showed inhibition of various different cell functions including cytokine production, antigen presentation, phagocytosis, and production of reactive oxygen species. The protein is Cytochrome P450 monooxygenase gliC of Aspergillus fumigatus (strain ATCC MYA-4609 / CBS 101355 / FGSC A1100 / Af293) (Neosartorya fumigata).